A 255-amino-acid polypeptide reads, in one-letter code: HTH-type transcriptional regulator SkgA (255 aa).

The HTH merR-type domain maps to 3 to 72 (VYTVKQMARL…LKDIQAALDQ (70 aa)). A DNA-binding region (H-T-H motif) is located at residues 6–25 (VKQMARLSGVSVRALHHYDA).

In terms of biological role, regulates the induction of katG (catalase-peroxidase) in stationary phase. In Caulobacter vibrioides (strain ATCC 19089 / CIP 103742 / CB 15) (Caulobacter crescentus), this protein is HTH-type transcriptional regulator SkgA (skgA).